The sequence spans 179 residues: Iron sulfur cluster assembly protein 1, mitochondrial (179 aa).

Residues 160-179 (RSVKQPTLGPEAAQAETIAT) form a disordered region.

It belongs to the NifU family. Component of the core Fe-S cluster (ISC) assembly machinery. [2Fe-2S] cluster is required as a cofactor.

It localises to the mitochondrion matrix. The protein operates within cofactor biosynthesis; iron-sulfur cluster biosynthesis. Scaffold protein for the de novo synthesis of iron-sulfur (Fe-S) clusters within mitochondria, which is required for maturation of both mitochondrial and cytoplasmic [2Fe-2S] and [4Fe-4S] proteins. First, a [2Fe-2S] cluster is transiently assembled on the scaffold protein ISU1. In a second step, the cluster is released from ISU1, transferred to a glutaredoxin, followed by the formation of mitochondrial [2Fe-2S] proteins, the synthesis of [4Fe-4S] clusters and their target-specific insertion into the recipient apoproteins. Cluster assembly on ISU1 depends on the function of the cysteine desulfurase complex NFS1-ISD11, which serves as the sulfur donor for cluster synthesis, the iron-binding protein frataxin as the putative iron donor, and the electron transfer chain comprised of ferredoxin reductase and ferredoxin, which receive their electrons from NADH. In Debaryomyces hansenii (strain ATCC 36239 / CBS 767 / BCRC 21394 / JCM 1990 / NBRC 0083 / IGC 2968) (Yeast), this protein is Iron sulfur cluster assembly protein 1, mitochondrial (ISU1).